The following is a 461-amino-acid chain: Vimentin (461 aa).

Composition is skewed to low complexity over residues 1-14 and 35-52; these read MNRTTSRQTTSSSS and SSRQYSSPVRSSRMSYSV. The tract at residues 1 to 52 is disordered; the sequence is MNRTTSRQTTSSSSYKRMFGGEGRPSVGMARSTLSSRQYSSPVRSSRMSYSV. The segment at 1 to 91 is head; sequence MNRTTSRQTT…FALSDAINSE (91 aa). A coil 1A region spans residues 92 to 127; it reads FKANRTNEKAEMQHLNDRFASYIDKVRFLEQQNKIL. Positions 92 to 127 form a coiled coil; that stretch reads FKANRTNEKAEMQHLNDRFASYIDKVRFLEQQNKIL. Positions 99–407 constitute an IF rod domain; that stretch reads EKAEMQHLND…KLLEGEESRI (309 aa). The linker 1 stretch occupies residues 128-149; it reads LAELEQLKGKGASRIGDLYEDE. The stretch at 150 to 241 forms a coiled coil; it reads MRDLRRQVDQ…KLHDEEVAEL (92 aa). Residues 150–241 are coil 1B; sequence MRDLRRQVDQ…KLHDEEVAEL (92 aa). Residues 242-264 are linker 12; it reads QAQIQDQHVQIDMDVAKPDLTAA. The segment at 265 to 403 is coil 2; sequence LRDVRVQYET…ATYRKLLEGE (139 aa). The stretch at 299–403 forms a coiled coil; the sequence is NRNTDAIRQA…ATYRKLLEGE (105 aa). Residues 404–461 form a tail region; that stretch reads ESRITTPMPNFSSFNLRESMLEARPMIDNLSKKVVIKTIETRDGHVINESTQNHDDLE.

It belongs to the intermediate filament family. As to quaternary structure, homomer assembled from elementary dimers. Post-translationally, one of the most prominent phosphoproteins in various cells of mesenchymal origin. Phosphorylation is enhanced during cell division, at which time vimentin filaments are significantly reorganized.

It localises to the cytoplasm. Its subcellular location is the cytoskeleton. It is found in the nucleus matrix. Vimentins are class-III intermediate filaments found in various non-epithelial cells, especially mesenchymal cells. Vimentin is attached to the nucleus, endoplasmic reticulum, and mitochondria, either laterally or terminally. The chain is Vimentin (vim) from Oncorhynchus mykiss (Rainbow trout).